We begin with the raw amino-acid sequence, 691 residues long: DNA ligase (691 aa).

Residues 41–45 (DAEYD), 90–91 (SL), and glutamate 130 contribute to the NAD(+) site. The active-site N6-AMP-lysine intermediate is lysine 132. NAD(+) is bound by residues arginine 153, glutamate 190, lysine 307, and lysine 331. Cysteine 425, cysteine 428, cysteine 443, and cysteine 449 together coordinate Zn(2+). Residues 610–691 (APQGVLAGKT…LHQLLEGNTQ (82 aa)) enclose the BRCT domain.

Belongs to the NAD-dependent DNA ligase family. LigA subfamily. Requires Mg(2+) as cofactor. The cofactor is Mn(2+).

It catalyses the reaction NAD(+) + (deoxyribonucleotide)n-3'-hydroxyl + 5'-phospho-(deoxyribonucleotide)m = (deoxyribonucleotide)n+m + AMP + beta-nicotinamide D-nucleotide.. In terms of biological role, DNA ligase that catalyzes the formation of phosphodiester linkages between 5'-phosphoryl and 3'-hydroxyl groups in double-stranded DNA using NAD as a coenzyme and as the energy source for the reaction. It is essential for DNA replication and repair of damaged DNA. This chain is DNA ligase, found in Burkholderia vietnamiensis (strain G4 / LMG 22486) (Burkholderia cepacia (strain R1808)).